The primary structure comprises 146 residues: Endoribonuclease YbeY (146 aa).

The Zn(2+) site is built by H108, H112, and H118.

The protein belongs to the endoribonuclease YbeY family. Requires Zn(2+) as cofactor.

It localises to the cytoplasm. In terms of biological role, single strand-specific metallo-endoribonuclease involved in late-stage 70S ribosome quality control and in maturation of the 3' terminus of the 16S rRNA. This Onion yellows phytoplasma (strain OY-M) protein is Endoribonuclease YbeY.